The sequence spans 188 residues: Peptidyl-tRNA hydrolase (188 aa).

Y14 serves as a coordination point for tRNA. The active-site Proton acceptor is H19. Positions 64, 66, and 112 each coordinate tRNA.

The protein belongs to the PTH family. As to quaternary structure, monomer.

It localises to the cytoplasm. It catalyses the reaction an N-acyl-L-alpha-aminoacyl-tRNA + H2O = an N-acyl-L-amino acid + a tRNA + H(+). In terms of biological role, hydrolyzes ribosome-free peptidyl-tRNAs (with 1 or more amino acids incorporated), which drop off the ribosome during protein synthesis, or as a result of ribosome stalling. Catalyzes the release of premature peptidyl moieties from peptidyl-tRNA molecules trapped in stalled 50S ribosomal subunits, and thus maintains levels of free tRNAs and 50S ribosomes. In Clostridium tetani (strain Massachusetts / E88), this protein is Peptidyl-tRNA hydrolase.